Consider the following 705-residue polypeptide: Probable E3 ubiquitin-protein ligase MID2 (705 aa).

The RING-type zinc-finger motif lies at 30-80; the sequence is CPICLELFEDPLLLPCAHSLCFSCAHRILVSSCSSGESIEPITAFQCPTCR. The B box-type 1; degenerate zinc finger occupies 137 to 184; the sequence is IACQFCEQDPPRDAVKTCITCEVSYCDRCLRATHPNKKPFTSHRLVEP. A B box-type 2 zinc finger spans residues 190–232; that stretch reads LRGITCLDHENEKVNMYCVSDDQLICALCKLVGRHRDHQVASL. The Zn(2+) site is built by Cys195, His198, Cys218, and His224. The stretch at 233 to 301 forms a coiled coil; the sequence is NDRFEKLKQT…IIQQRKQMIA (69 aa). The COS domain maps to 340 to 399; sequence LKENDQARFLQSAKNIAERVAMATASSQVLIPDINFNDAFENFALDFSREKKLLEGLDYL. Positions 404-504 constitute a Fibronectin type-III domain; that stretch reads PPSIREELCT…EPTRLKTNSQ (101 aa). The B30.2/SPRY domain maps to 486-679; sequence INQAGSRNSE…ILSGLPAPDF (194 aa).

The protein belongs to the TRIM/RBCC family. In terms of assembly, homodimer or heterodimer with MID1. Interacts with IGBP1. Post-translationally, phosphorylated on serine and threonine residues. In terms of tissue distribution, low abundance in brain and lung, with even lower levels in heart, liver, and kidney.

It is found in the cytoplasm. Its subcellular location is the cytoskeleton. The catalysed reaction is S-ubiquitinyl-[E2 ubiquitin-conjugating enzyme]-L-cysteine + [acceptor protein]-L-lysine = [E2 ubiquitin-conjugating enzyme]-L-cysteine + N(6)-ubiquitinyl-[acceptor protein]-L-lysine.. The protein operates within protein modification; protein ubiquitination. In terms of biological role, E3 ubiquitin ligase that plays a role in microtubule stabilization. Mediates the 'Lys-48'-linked polyubiquitination of LRRK2 to drive its localization to microtubules and its proteasomal degradation in neurons. This ubiquitination inhibits LRRK2 kinase activation by RAB29. In Mus musculus (Mouse), this protein is Probable E3 ubiquitin-protein ligase MID2 (Mid2).